Reading from the N-terminus, the 421-residue chain is Tyrosine--tRNA ligase (421 aa).

Tyr-38 is a binding site for L-tyrosine. Residues 43 to 52 carry the 'HIGH' region motif; the sequence is PTGDSLHIGH. 2 residues coordinate L-tyrosine: Tyr-169 and Gln-173. The 'KMSKS' region motif lies at 231 to 235; that stretch reads KFGKS. Lys-234 is a binding site for ATP. Residues 353–419 enclose the S4 RNA-binding domain; it reads KNLVDFLVDT…GKKKYTLVHI (67 aa).

Belongs to the class-I aminoacyl-tRNA synthetase family. TyrS type 1 subfamily. In terms of assembly, homodimer.

The protein localises to the cytoplasm. It catalyses the reaction tRNA(Tyr) + L-tyrosine + ATP = L-tyrosyl-tRNA(Tyr) + AMP + diphosphate + H(+). Its function is as follows. Catalyzes the attachment of tyrosine to tRNA(Tyr) in a two-step reaction: tyrosine is first activated by ATP to form Tyr-AMP and then transferred to the acceptor end of tRNA(Tyr). The chain is Tyrosine--tRNA ligase from Lactobacillus delbrueckii subsp. bulgaricus (strain ATCC BAA-365 / Lb-18).